A 297-amino-acid chain; its full sequence is uncharacterized protein (297 aa).

The 60-residue stretch at 1–60 folds into the HTH lysR-type domain; the sequence is MNIELRHLRYFVAVAEELHFGRAAARLNISQPPLSQQIQALEQQIGARLLARTNRSVLLT. Positions 20–40 form a DNA-binding region, H-T-H motif; the sequence is FGRAAARLNISQPPLSQQIQA.

This sequence belongs to the LysR transcriptional regulatory family.

This is an uncharacterized protein from Escherichia coli (strain K12).